The chain runs to 452 residues: Cysteine--tRNA ligase (452 aa).

Cys35 lines the Zn(2+) pocket. A 'HIGH' region motif is present at residues 37–47; sequence PTVYDRAHLGN. Cys215, His240, and Glu244 together coordinate Zn(2+). The 'KMSKS' region motif lies at 273 to 277; it reads KMSKS. Lys276 is an ATP binding site.

It belongs to the class-I aminoacyl-tRNA synthetase family. Monomer. Zn(2+) serves as cofactor.

Its subcellular location is the cytoplasm. It carries out the reaction tRNA(Cys) + L-cysteine + ATP = L-cysteinyl-tRNA(Cys) + AMP + diphosphate. The polypeptide is Cysteine--tRNA ligase (Gluconobacter oxydans (strain 621H) (Gluconobacter suboxydans)).